The primary structure comprises 260 residues: MALIRVLASLLILQLSYAVTPFDRIIGGFECNEYEHRSLVHLYNSSGFFCSGTLLNHEWVLTAAHCNRDDIQIKLGVHNVSVNYEDEQIRVPKEKLCCHSTNNCTQLGQDIMLIRLNSSVNYSEHIAPLSLPSNRPSMGSVCRVMGWGLLTSPEVTFPKVPHCVDINILHIQVCQAAYPSMSENYLLCAGVLEGGKDSCKGDSGGPLICNREIQGIVSWGGFPCAQLLEPGVYTKVFDYIDWIEGIIAGNTSVTCPSDNF.

The first 18 residues, 1–18, serve as a signal peptide directing secretion; the sequence is MALIRVLASLLILQLSYA. A propeptide spanning residues 19–24 is cleaved from the precursor; that stretch reads VTPFDR. In terms of domain architecture, Peptidase S1 spans 25-248; the sequence is IIGGFECNEY…YIDWIEGIIA (224 aa). 6 cysteine pairs are disulfide-bonded: C31-C163, C50-C66, C98-C255, C142-C209, C174-C188, and C199-C224. N44 carries N-linked (GlcNAc...) asparagine glycosylation. H65 acts as the Charge relay system in catalysis. N79 carries an N-linked (GlcNAc...) asparagine glycan. The active-site Charge relay system is D110. N-linked (GlcNAc...) asparagine glycans are attached at residues N117 and N121. The Charge relay system role is filled by S203. N-linked (GlcNAc...) asparagine glycosylation occurs at N250.

It belongs to the peptidase S1 family. Snake venom subfamily. As to quaternary structure, monomer. In terms of tissue distribution, expressed by the venom gland.

Its subcellular location is the secreted. Completely inhibited by NPGB, PMSF, diisopropylfluorophosphate (DFP), benzamidine and soybean trypsin inhibitor. Not inhibited by EDTA. Its function is as follows. Snake venom serine protease that possesses potent fibrinogenolytic (on both alpha- (FGA) and beta-chains (FGB)) and amidolytic activities. Selectively cleaves Arg-|-Xaa or Lys-|-Xaa bonds. The chain is Alpha- and beta-fibrinogenase OhS1 from Ophiophagus hannah (King cobra).